We begin with the raw amino-acid sequence, 234 residues long: Orotate phosphoribosyltransferase (234 aa).

A 5-phospho-alpha-D-ribose 1-diphosphate-binding site is contributed by K30. F38–F39 is an orotate binding site. 5-phospho-alpha-D-ribose 1-diphosphate-binding positions include Y76–K77, R103, K104, K107, H109, and D128–A136. Orotate contacts are provided by T132 and R160.

Belongs to the purine/pyrimidine phosphoribosyltransferase family. PyrE subfamily. In terms of assembly, homodimer. Mg(2+) is required as a cofactor.

The catalysed reaction is orotidine 5'-phosphate + diphosphate = orotate + 5-phospho-alpha-D-ribose 1-diphosphate. Its pathway is pyrimidine metabolism; UMP biosynthesis via de novo pathway; UMP from orotate: step 1/2. In terms of biological role, catalyzes the transfer of a ribosyl phosphate group from 5-phosphoribose 1-diphosphate to orotate, leading to the formation of orotidine monophosphate (OMP). The protein is Orotate phosphoribosyltransferase of Chromohalobacter salexigens (strain ATCC BAA-138 / DSM 3043 / CIP 106854 / NCIMB 13768 / 1H11).